Here is a 445-residue protein sequence, read N- to C-terminus: Chromosome partition protein MukF (445 aa).

Residues 213 to 241 (LSETSSTLRELQDTLQAASDELQTQILDI) are leucine-zipper.

This sequence belongs to the MukF family. Interacts, and probably forms a ternary complex, with MukE and MukB via its C-terminal region. The complex formation is stimulated by calcium or magnesium. It is required for an interaction between MukE and MukB.

It localises to the cytoplasm. The protein localises to the nucleoid. In terms of biological role, involved in chromosome condensation, segregation and cell cycle progression. May participate in facilitating chromosome segregation by condensation DNA from both sides of a centrally located replisome during cell division. Not required for mini-F plasmid partitioning. Probably acts via its interaction with MukB and MukE. Overexpression results in anucleate cells. It has a calcium binding activity. This is Chromosome partition protein MukF from Vibrio parahaemolyticus serotype O3:K6 (strain RIMD 2210633).